The following is a 436-amino-acid chain: GTPase Der (436 aa).

EngA-type G domains are found at residues 4–167 and 175–351; these read PTVA…PVEE and IRFS…ESQN. GTP contacts are provided by residues 10-17, 57-61, 119-122, 181-188, 229-233, and 294-297; these read GRPNVGKS, DTGGI, NKVD, DTAGM, and NKWD. The KH-like domain occupies 352-436; that stretch reads KRIPSAVLND…PIHLIARKRK (85 aa).

This sequence belongs to the TRAFAC class TrmE-Era-EngA-EngB-Septin-like GTPase superfamily. EngA (Der) GTPase family. Associates with the 50S ribosomal subunit.

Its function is as follows. GTPase that plays an essential role in the late steps of ribosome biogenesis. The polypeptide is GTPase Der (Streptococcus pyogenes serotype M2 (strain MGAS10270)).